The sequence spans 286 residues: Polygalacturonan/rhamnogalacturonan transport system permease protein YtcP (286 aa).

The next 6 helical transmembrane spans lie at 9 to 29 (LIYG…IHVI), 69 to 89 (LLVS…LSSL), 106 to 126 (MFLV…FLVV), 131 to 151 (LLDS…NLII), 176 to 196 (GIFF…ISLF), and 251 to 271 (TIKM…YPFI). The ABC transmembrane type-1 domain maps to 69-271 (LLVSVFVTVI…IPVLLVYPFI (203 aa)).

Belongs to the binding-protein-dependent transport system permease family. CysTW subfamily. The complex is probably composed of two ATP-binding proteins (MsmX), two transmembrane proteins (YtcP and YteP) and a solute-binding protein (YtcQ).

The protein localises to the cell membrane. In terms of biological role, involved in pectin degradation. Part of the ABC transporter complex YtcQP-YteP involved in the uptake of polygalacturonan and rhamnogalacturonan type I. Responsible for the translocation of the substrate across the membrane. The polypeptide is Polygalacturonan/rhamnogalacturonan transport system permease protein YtcP (ytcP) (Bacillus subtilis (strain 168)).